The chain runs to 217 residues: Glycerol-3-phosphate acyltransferase (217 aa).

Helical transmembrane passes span 3 to 23, 56 to 76, 78 to 98, 120 to 140, 142 to 162, and 163 to 183; these read IVILLLVAYLLGSIPSGVWIG, VLLMDILKGTLATSLPYLFGL, GVNPLFFGVAAVLGHTFPIFA, FFIYSALIFVICLYLTSMVSL, SMISAVLITLSTIILPFTVPA, and ILPTFNWLLTVIAIALTTFIF.

Belongs to the PlsY family. Probably interacts with PlsX.

The protein localises to the cell membrane. It catalyses the reaction an acyl phosphate + sn-glycerol 3-phosphate = a 1-acyl-sn-glycero-3-phosphate + phosphate. The protein operates within lipid metabolism; phospholipid metabolism. Catalyzes the transfer of an acyl group from acyl-phosphate (acyl-PO(4)) to glycerol-3-phosphate (G3P) to form lysophosphatidic acid (LPA). This enzyme utilizes acyl-phosphate as fatty acyl donor, but not acyl-CoA or acyl-ACP. The polypeptide is Glycerol-3-phosphate acyltransferase (Enterococcus faecalis (strain ATCC 700802 / V583)).